A 1629-amino-acid chain; its full sequence is Ferredoxin-dependent glutamate synthase 2, chloroplastic (1629 aa).

Residues 1–107 (MALQSPGATG…LEDIISERGA (107 aa)) constitute a chloroplast transit peptide. Residue Cys108 is the For GATase activity of the active site. Residues 108–507 (CGVGFIANLE…PGMMISVDLE (400 aa)) enclose the Glutamine amidotransferase type-2 domain. Residue 1186–1243 (LAETQKTLIGNGLRERVIIRVDGGFKSGVDVLIAAAMGADEYGFGTLAMIATGCIMAR) coordinates FMN. Residues Cys1239, Cys1245, and Cys1250 each coordinate [3Fe-4S] cluster. A disordered region spans residues 1599-1629 (SEEDTPEANSDHILKTTTGDEEQVSSTLAEK).

It belongs to the glutamate synthase family. It depends on [3Fe-4S] cluster as a cofactor. Requires FAD as cofactor. The cofactor is FMN. In terms of tissue distribution, expressed predominantly in roots and slightly in leaves. Low expression in the leaf mesophyll and phloem companion cell-sieve element complex.

Its subcellular location is the plastid. The protein localises to the chloroplast stroma. The catalysed reaction is 2 oxidized [2Fe-2S]-[ferredoxin] + 2 L-glutamate = L-glutamine + 2 reduced [2Fe-2S]-[ferredoxin] + 2-oxoglutarate + 2 H(+). Its pathway is amino-acid biosynthesis; L-glutamate biosynthesis via GLT pathway; L-glutamate from 2-oxoglutarate and L-glutamine (ferredoxin route): step 1/1. The protein operates within energy metabolism; nitrogen metabolism. May play a role in primary nitrogen assimilation in roots. Could supply a constitutive level of glutamate to maintain a basal level of protein synthesis. The chain is Ferredoxin-dependent glutamate synthase 2, chloroplastic (GLU2) from Arabidopsis thaliana (Mouse-ear cress).